The sequence spans 660 residues: Glutenin, high molecular weight subunit 12 (660 aa).

The first 21 residues, 1–21 (MAKRLVLFAAVVIALVALTTA), serve as a signal peptide directing secretion. Over residues 127–136 (YYPSVTSPRQ) the composition is skewed to polar residues. The tract at residues 127–660 (YYPSVTSPRQ…EGGDALSASQ (534 aa)) is disordered. Composition is skewed to low complexity over residues 141–166 (PGQASPQQPGQGQQPGKWQEPGQGQQ), 187–200 (QGYYPTSLQQPGQG), 208–248 (QGYY…WQQG), and 255–275 (QQLGQGQQPGQWQQSGQGQQG). Over residues 276–286 (HYPTSLQQPGQ) the composition is skewed to polar residues. Residues 296–365 (QQQPAQGQQG…QQQPGQGQQG (70 aa)) are compositionally biased toward low complexity. Polar residues predominate over residues 370–384 (SLQQPGQQGHYPTSL). Composition is skewed to low complexity over residues 385–426 (QQLG…GQQG), 478–514 (PGQRQQPGQGQHPEQGQQPGQGQQGYYPTSPQQPGQG), 522–535 (QGYYPTSPQQPGQG), and 551–577 (QQTGQAQQLGQGQQIGQVQQPGQGQQG). Positions 590–604 (QQSGQGQQSGQGHQP) are enriched in gly residues.

It belongs to the gliadin/glutenin family. In terms of assembly, disulfide-bridge linked aggregates.

In terms of biological role, glutenins are high-molecular weight seed storage proteins of wheat endosperm. Thought to be responsible for the visco-elastic property of wheat dough. The sequence is that of Glutenin, high molecular weight subunit 12 from Triticum aestivum (Wheat).